The following is an 845-amino-acid chain: MFGLSKVLRVGEGRAVKRLHKIADQVIALEDKFANLTDEELKAKTAEFKERIAGGEGLDEIFLEAFATAREAAWRVLGQKHYHVQIMGGAALHFGNVAEMRTGEGKTLTCVLPAYLNALEGKGVHVVTVNDYLAKRDAEMMGRVHRYLGLEVGVILSDMRPDERREAYAADITYGTNNELGFDYLRDNMARSLSDLVQRGHNYAIVDEVDSILIDEARTPLIISGPVDGTSQFYNVFAQIVPRMTKDVHYEVDERKKTVGVKEEGVEYVEDQLGIDNLYAPEHSQLVSYLNNAIKAQELFTRDKDYIVRNGEVMIVDGFTGRVLAGRRYNEGMHQAIEAKERVEIKNENQTLATVTLQNYFRLYTKLAGMTGTAETEAAELNQIYKLDVIAIPTNRPNQREDLTDLVYKTQEAKFAAVVDDIAERTEKGQPVLVGTVSVERSEYLSQLLTKRGIKHNVLNAKHHEQEAQIVAQAGLPGAVTVATNMAGRGTDIVLGGNPEILLDIKLRERGLDPFEDEESYQEAWDAELPAMKQRCEERGDKVREAGGLYVLGTERHESRRIDNQLRGRSARQGDPGSTRFYLSMRDDLMVRFVGPTMENMMNRLNVPDDVPIESKTVTNSIKGAQAQVENQNFEMRKNVLKYDEVMNEQRKVIYSERREILESADISRYIQNMIEETVSAYVDGATANGYVEDWDLDKLWNALEALYDPSINWTDLVEGSEYGKPGELSAEDLRTALVNDAHAEYAKLEEAVSAIGGEAQIRNIERMVLMPVIDTKWREHLYEMDYLKEGIGLRAMAQRDPLVEYQKEGGDMFNGMKDGIKEETVRQLFLLRKQFIKQDAEVAD.

ATP contacts are provided by residues Gln-85, 103–107 (GEGKT), and Asp-492.

Belongs to the SecA family. In terms of assembly, monomer and homodimer. Part of the essential Sec protein translocation apparatus which comprises SecA, SecYEG and auxiliary proteins SecDF. Other proteins may also be involved.

Its subcellular location is the cell membrane. The protein resides in the cytoplasm. It carries out the reaction ATP + H2O + cellular proteinSide 1 = ADP + phosphate + cellular proteinSide 2.. Functionally, part of the Sec protein translocase complex. Interacts with the SecYEG preprotein conducting channel. Has a central role in coupling the hydrolysis of ATP to the transfer of proteins into and across the cell membrane, serving as an ATP-driven molecular motor driving the stepwise translocation of polypeptide chains across the membrane. The polypeptide is Protein translocase subunit SecA 1 (Corynebacterium glutamicum (strain ATCC 13032 / DSM 20300 / JCM 1318 / BCRC 11384 / CCUG 27702 / LMG 3730 / NBRC 12168 / NCIMB 10025 / NRRL B-2784 / 534)).